The following is a 221-amino-acid chain: Small ribosomal subunit protein uS2c (221 aa).

The protein belongs to the universal ribosomal protein uS2 family.

It is found in the plastid. Its subcellular location is the chloroplast. This chain is Small ribosomal subunit protein uS2c (rps2), found in Cyanidioschyzon merolae (strain NIES-3377 / 10D) (Unicellular red alga).